The primary structure comprises 157 residues: 2-C-methyl-D-erythritol 2,4-cyclodiphosphate synthase (157 aa).

A divalent metal cation-binding residues include Asp8 and His10. 4-CDP-2-C-methyl-D-erythritol 2-phosphate-binding positions include 8 to 10 (DVH) and 34 to 35 (HS). His42 provides a ligand contact to a divalent metal cation. Residues 56-58 (DIG), 61-65 (FPDTD), 100-106 (AQAPKMA), 132-135 (TTTE), Phe139, and Arg142 each bind 4-CDP-2-C-methyl-D-erythritol 2-phosphate.

This sequence belongs to the IspF family. As to quaternary structure, homotrimer. A divalent metal cation serves as cofactor.

The catalysed reaction is 4-CDP-2-C-methyl-D-erythritol 2-phosphate = 2-C-methyl-D-erythritol 2,4-cyclic diphosphate + CMP. It participates in isoprenoid biosynthesis; isopentenyl diphosphate biosynthesis via DXP pathway; isopentenyl diphosphate from 1-deoxy-D-xylulose 5-phosphate: step 4/6. Its function is as follows. Involved in the biosynthesis of isopentenyl diphosphate (IPP) and dimethylallyl diphosphate (DMAPP), two major building blocks of isoprenoid compounds. Catalyzes the conversion of 4-diphosphocytidyl-2-C-methyl-D-erythritol 2-phosphate (CDP-ME2P) to 2-C-methyl-D-erythritol 2,4-cyclodiphosphate (ME-CPP) with a corresponding release of cytidine 5-monophosphate (CMP). The chain is 2-C-methyl-D-erythritol 2,4-cyclodiphosphate synthase from Pseudomonas putida (strain GB-1).